Reading from the N-terminus, the 1499-residue chain is Pleiotropic ABC efflux transporter of multiple drugs CDR1 (1499 aa).

Positions 1–11 (MSLASDKKDAD) are enriched in basic and acidic residues. The disordered stretch occupies residues 1–29 (MSLASDKKDADVASTTTTAQDDDNLSTYH). 3 N-linked (GlcNAc...) asparagine glycosylation sites follow: Asn-24, Asn-96, and Asn-99. The ABC transporter 1 domain occupies 146–399 (VYNTVVPSTA…FQKMGYVSPE (254 aa)). The residue at position 307 (Ser-307) is a Phosphoserine. The N-linked (GlcNAc...) asparagine glycan is linked to Asn-323. Ser-484 carries the post-translational modification Phosphoserine. The chain crosses the membrane as a helical span at residues 510–530 (GVTLFMVIGNSSMAFILGSMF). N-linked (GlcNAc...) asparagine glycosylation occurs at Asn-537. 5 helical membrane-spanning segments follow: residues 548–568 (AMFF…FSLF), 597–617 (VPAK…LVNF), 622–642 (GVFF…SHLF), 654–674 (AAMV…GFAI), and 763–783 (GFGI…ILCE). N-linked (GlcNAc...) asparagine glycosylation is present at Asn-813. Residues 857–1099 (FHWRNLCYDV…TMIDYFESHG (243 aa)) form the ABC transporter 2 domain. Position 893 to 900 (893 to 900 (GASGAGKT)) interacts with ATP. Asn-1159 carries N-linked (GlcNAc...) asparagine glycosylation. The next 3 membrane-spanning stretches (helical) occupy residues 1193–1213 (YLWS…FTFF), 1228–1248 (AVFM…PSFV), and 1278–1298 (IPWN…AIGF). An N-linked (GlcNAc...) asparagine glycan is attached at Asn-1301. A run of 2 helical transmembrane segments spans residues 1314–1334 (LFWL…LFCI) and 1342–1362 (AAAN…GVLV). Asn-1412 carries an N-linked (GlcNAc...) asparagine glycan. Residues 1466-1486 (WGIFICYIAFNYIAGIFLYWL) traverse the membrane as a helical segment.

This sequence belongs to the ABC transporter superfamily. Phosphorylated at Ser-307 and Ser-484. Ser-307 and Ser-484 are dephosphorylated on glucose depletion and independently rephosphorylated during glucose exposure or under stress.

The protein resides in the cell membrane. With respect to regulation, inhibited by clorgyline. Inhibited by RC21v3, a 4-methoxy-2,3,6-trimethylbenzenesulphonyl derivative of the D-octapeptide D-FFKWQRRR, via the interaction with the ectodomain. FK506, enniatin, milbemycin alpha-11, and milbemycin beta-9 also inhibit CDR1 activity. Inhibited by milbemycin A3/A4 oxim derivatives. In terms of biological role, pleiotropic ABC efflux transporter that transports and confers resistance to structurally and functionally unrelated compounds including rhodamine 6G, Nile red, caspofungin, cycloheximide, or azoles such as fluconazole, itraconazole, ketoconazole, posaconazole, voriconazole, and isavuconazole. Chlorbromuron, itraconazole, yohimbine, ketoconazole, miconazole, clotrimazole, DE-11, tamoxifen, quinidine, verapamil can compete for rhodamine 6G's binding site(s) while compounds such as propanil, chloramphenicol, benomyl, voriconazole, tritylimidazole, ketoconazole, miconazole, tamoxifen, gefitinib shared binding site(s) with fluconazole. Nile red mediated efflux appears to be relatively more specific since only five compounds such as ZW3-12, rhodamine 123, miconazole, clotrimazole, and itraconazole can inhibit its accumulation. Does not use as substrates 4-nitroquinoline 1-oxide (4-NQO) and disulfiram. Does not play a role in the azole resistance in mature biofilms. The polypeptide is Pleiotropic ABC efflux transporter of multiple drugs CDR1 (Candida glabrata (strain ATCC 2001 / BCRC 20586 / JCM 3761 / NBRC 0622 / NRRL Y-65 / CBS 138) (Yeast)).